The primary structure comprises 340 residues: MKITYVGLIKVCFLVFLLLCATVLLNISWRQRDSSQSLQHCNSTCSAKYLETKLKEAHLTGRHKKWETYRLDAKPTSATGQGHQHFAKEPLQIKDLFIAVKTTKKYHGNRLNLLMQTWISRAKEQTFIFTDWEDQELRQKAGDQMVNTNCSAVHTRQALCCKMAVEYDKFVLSDKKWFCHLDDDNYLNLHALLDLLSTFSHSTDVYVGRPSLDHPVETVDRMKGDGSGSLKFWFATGGAGFCISRGLALKMSPWASMGNFISTAEKVRLPDDCTIGYIIEGMLDVKMQHSNLFHSHLEHLQRLPTESLLKQVTLSYGGPDNKWNVVRVNGAFSLAEDPTR.

The Cytoplasmic portion of the chain corresponds to 1 to 4; sequence MKIT. Residues 5–25 traverse the membrane as a helical; Signal-anchor for type II membrane protein segment; sequence YVGLIKVCFLVFLLLCATVLL. The Lumenal portion of the chain corresponds to 26-340; that stretch reads NISWRQRDSS…AFSLAEDPTR (315 aa). An N-linked (GlcNAc...) asparagine glycan is attached at N42. Position 110 (R110) interacts with substrate. N149 carries N-linked (GlcNAc...) asparagine glycosylation. Disulfide bonds link C150/C161 and C179/C242. D183 serves as a coordination point for substrate. Residue D184 participates in Mn(2+) binding. D272 is a catalytic residue. Residue H296 participates in Mn(2+) binding.

Belongs to the glycosyltransferase 31 family. It depends on Mn(2+) as a cofactor.

The protein resides in the golgi apparatus membrane. The catalysed reaction is 3-O-(alpha-L-fucosyl)-L-threonyl-[EGF-like domain protein] + UDP-N-acetyl-alpha-D-glucosamine = 3-O-(N-acetyl-beta-D-glucosaminyl-(1-&gt;3)-alpha-L-fucosyl)-L-threonyl-[EGF-like domain protein] + UDP + H(+). It carries out the reaction 3-O-(alpha-L-fucosyl)-L-seryl-[EGF-like domain protein] + UDP-N-acetyl-alpha-D-glucosamine = 3-O-(N-acetyl-beta-D-glucosaminyl-(1-&gt;3)-alpha-L-fucosyl)-L-seryl-[EGF-like domain protein] + UDP + H(+). Functionally, glycosyltransferase that initiates the elongation of O-linked fucose residues attached to EGF-like repeats in the extracellular domain of Notch molecules. This chain is Beta-1,3-N-acetylglucosaminyltransferase radical fringe (rfng), found in Xenopus laevis (African clawed frog).